The primary structure comprises 367 residues: Glutamate 5-kinase (367 aa).

Residue Lys10 participates in ATP binding. The substrate site is built by Ser50, Asp137, and Asn149. ATP contacts are provided by residues 169–170 (TD) and 211–217 (TGGMGTK). The PUA domain maps to 275 to 353 (AGEITVDEGA…QQIDAILGYE (79 aa)).

The protein belongs to the glutamate 5-kinase family.

Its subcellular location is the cytoplasm. The catalysed reaction is L-glutamate + ATP = L-glutamyl 5-phosphate + ADP. Its pathway is amino-acid biosynthesis; L-proline biosynthesis; L-glutamate 5-semialdehyde from L-glutamate: step 1/2. Functionally, catalyzes the transfer of a phosphate group to glutamate to form L-glutamate 5-phosphate. This Enterobacter sp. (strain 638) protein is Glutamate 5-kinase.